Reading from the N-terminus, the 286-residue chain is ATP synthase gamma chain (286 aa).

It belongs to the ATPase gamma chain family. F-type ATPases have 2 components, CF(1) - the catalytic core - and CF(0) - the membrane proton channel. CF(1) has five subunits: alpha(3), beta(3), gamma(1), delta(1), epsilon(1). CF(0) has three main subunits: a, b and c.

The protein localises to the cell inner membrane. Functionally, produces ATP from ADP in the presence of a proton gradient across the membrane. The gamma chain is believed to be important in regulating ATPase activity and the flow of protons through the CF(0) complex. The sequence is that of ATP synthase gamma chain from Shewanella frigidimarina (strain NCIMB 400).